Reading from the N-terminus, the 227-residue chain is PKHD-type hydroxylase Bpro_3048 (227 aa).

A Fe2OG dioxygenase domain is found at 78 to 179; that stretch reads KIFTPRINRY…RLACFFWVES (102 aa). Fe cation-binding residues include His97, Asp99, and His160. Arg170 lines the 2-oxoglutarate pocket.

Fe(2+) serves as cofactor. The cofactor is L-ascorbate.

This chain is PKHD-type hydroxylase Bpro_3048, found in Polaromonas sp. (strain JS666 / ATCC BAA-500).